A 207-amino-acid chain; its full sequence is dITP/XTP pyrophosphatase (207 aa).

7-12 (SNNAKK) serves as a coordination point for substrate. Asp-72 serves as the catalytic Proton acceptor. Residue Asp-72 coordinates Mg(2+). Residues Ser-73, 155 to 158 (FGYD), Lys-183, and 188 to 189 (HR) contribute to the substrate site.

The protein belongs to the HAM1 NTPase family. In terms of assembly, homodimer. Mg(2+) serves as cofactor.

It catalyses the reaction XTP + H2O = XMP + diphosphate + H(+). The enzyme catalyses dITP + H2O = dIMP + diphosphate + H(+). The catalysed reaction is ITP + H2O = IMP + diphosphate + H(+). Its function is as follows. Pyrophosphatase that catalyzes the hydrolysis of nucleoside triphosphates to their monophosphate derivatives, with a high preference for the non-canonical purine nucleotides XTP (xanthosine triphosphate), dITP (deoxyinosine triphosphate) and ITP. Seems to function as a house-cleaning enzyme that removes non-canonical purine nucleotides from the nucleotide pool, thus preventing their incorporation into DNA/RNA and avoiding chromosomal lesions. The protein is dITP/XTP pyrophosphatase of Corynebacterium diphtheriae (strain ATCC 700971 / NCTC 13129 / Biotype gravis).